The sequence spans 228 residues: Ribose-5-phosphate isomerase A (228 aa).

Substrate is bound by residues Thr27–Thr30, Asp86–Asp89, and Lys100–Gly103. Catalysis depends on Glu109, which acts as the Proton acceptor. Residue Lys127 coordinates substrate.

It belongs to the ribose 5-phosphate isomerase family. As to quaternary structure, homodimer.

The enzyme catalyses aldehydo-D-ribose 5-phosphate = D-ribulose 5-phosphate. It functions in the pathway carbohydrate degradation; pentose phosphate pathway; D-ribose 5-phosphate from D-ribulose 5-phosphate (non-oxidative stage): step 1/1. In terms of biological role, catalyzes the reversible conversion of ribose-5-phosphate to ribulose 5-phosphate. This is Ribose-5-phosphate isomerase A from Borrelia hermsii (strain HS1 / DAH).